A 221-amino-acid polypeptide reads, in one-letter code: Large ribosomal subunit protein uL4 (221 aa).

The interval 48-77 (TASTKTRGEVSGGGRKPWIQKHTGRARQGS) is disordered.

It belongs to the universal ribosomal protein uL4 family. Part of the 50S ribosomal subunit.

Its function is as follows. One of the primary rRNA binding proteins, this protein initially binds near the 5'-end of the 23S rRNA. It is important during the early stages of 50S assembly. It makes multiple contacts with different domains of the 23S rRNA in the assembled 50S subunit and ribosome. Forms part of the polypeptide exit tunnel. This chain is Large ribosomal subunit protein uL4, found in Thermosipho africanus (strain TCF52B).